Here is a 340-residue protein sequence, read N- to C-terminus: GTPase Obg (340 aa).

The Obg domain maps to 1 to 159; sequence MRFIDKAKIH…RWIELELKLI (159 aa). Residues 160-331 form the OBG-type G domain; sequence ADIGIIGFPN…LIKLIAEVYE (172 aa). GTP contacts are provided by residues 166-173, 191-195, 213-216, 283-286, and 312-314; these read GFPNAGKS, FTTLT, DIPG, NKID, and SLV. The Mg(2+) site is built by serine 173 and threonine 193.

The protein belongs to the TRAFAC class OBG-HflX-like GTPase superfamily. OBG GTPase family. In terms of assembly, monomer. The cofactor is Mg(2+).

It localises to the cytoplasm. An essential GTPase which binds GTP, GDP and possibly (p)ppGpp with moderate affinity, with high nucleotide exchange rates and a fairly low GTP hydrolysis rate. Plays a role in control of the cell cycle, stress response, ribosome biogenesis and in those bacteria that undergo differentiation, in morphogenesis control. This chain is GTPase Obg, found in Persephonella marina (strain DSM 14350 / EX-H1).